We begin with the raw amino-acid sequence, 377 residues long: Prostaglandin reductase-3 (377 aa).

Residue Lys35 is modified to N6-acetyllysine. NADP(+) contacts are provided by Thr185, Ser205, Lys209, Tyr224, Ser247, Ile269, and Tyr275. Ser299 is modified (phosphoserine). NADP(+) is bound by residues Phe303–Leu305 and Asn361.

The protein belongs to the zinc-containing alcohol dehydrogenase family. Quinone oxidoreductase subfamily.

It is found in the peroxisome. It carries out the reaction 13,14-dihydro-15-oxo-prostaglandin E2 + NADP(+) = 15-oxoprostaglandin E2 + NADPH + H(+). The catalysed reaction is 13,14-dihydro-15-oxo-prostaglandin E1 + NADP(+) = 15-oxoprostaglandin E1 + NADPH + H(+). It catalyses the reaction 13,14-dihydro-15-oxo-PGF2alpha + NADP(+) = 15-oxoprostaglandin F2alpha + NADPH + H(+). The enzyme catalyses 13,14-dihydro-15-oxo-prostaglandin F1alpha + NADP(+) = 15-oxoprostaglandin F1alpha + NADPH + H(+). Functionally, functions as 15-oxo-prostaglandin 13-reductase and acts on 15-keto-PGE1, 15-keto-PGE2, 15-keto-PGE1-alpha and 15-keto-PGE2-alpha with highest efficiency towards 15-keto-PGE2-alpha. Overexpression represses transcriptional activity of PPARG and inhibits adipocyte differentiation. This is Prostaglandin reductase-3 (PTGR3) from Bos taurus (Bovine).